We begin with the raw amino-acid sequence, 606 residues long: Glucose methanol choline oxidoreductase atC (606 aa).

An N-terminal signal peptide occupies residues 1–19 (MRVFPTYIAVSGLFGGAFA). Asn-43, Asn-69, Asn-87, Asn-290, Asn-368, Asn-418, Asn-421, and Asn-552 each carry an N-linked (GlcNAc...) asparagine glycan.

Belongs to the GMC oxidoreductase family.

It catalyses the reaction terremutin + A = terreate + AH2. It participates in secondary metabolite biosynthesis. In terms of biological role, glucose methanol choline oxidoreductase; part of the gene cluster that mediates the biosynthesis of terreic acid, a quinone epoxide inhibitor of Bruton's tyrosine kinase. The first step of the pathway is the synthesis of 6-methylsalicylic acid (6-MSA) by the 6-methylsalicylic acid synthase atX. In the biosynthesis of 6-MSA, atX utilizes one acetyl-CoA and three malonyl-CoAs as its substrates and catalyzes a series of programmed reactions including Claisen condensation, reduction, aldol cyclization, and the hydrolytic cleavage that yields 6-MSA. The 6-methylsalicylate 1-monooxygenase atA then catalyzes the decarboxylative hydroxylation of 6-MSA to 3-methylcatechol. The next step is the conversion of 3-methylcatechol to 3-methyl-1,2,4-benzenetriol by cytochrome P450 monooxygenase atE, which is enhanced by cytochrome P450 monooxygenase atG. Then, the epoxidase atD catalyzes the epoxidation and hydroxyl oxidation of 3-methyl-1,2,4-benzenetriol to terremutin. Lastly, GMC oxidoreductase atC oxidizes terremutin to terreic acid. The protein is Glucose methanol choline oxidoreductase atC of Aspergillus terreus (strain NIH 2624 / FGSC A1156).